We begin with the raw amino-acid sequence, 198 residues long: Endonuclease V (198 aa).

Asp-38 and Asp-101 together coordinate Mg(2+).

The protein belongs to the endonuclease V family. Mg(2+) serves as cofactor.

Its subcellular location is the cytoplasm. It catalyses the reaction Endonucleolytic cleavage at apurinic or apyrimidinic sites to products with a 5'-phosphate.. In terms of biological role, DNA repair enzyme involved in the repair of deaminated bases. Selectively cleaves double-stranded DNA at the second phosphodiester bond 3' to a deoxyinosine leaving behind the intact lesion on the nicked DNA. The chain is Endonuclease V from Saccharolobus islandicus (strain Y.N.15.51 / Yellowstone #2) (Sulfolobus islandicus).